Consider the following 77-residue polypeptide: Small ribosomal subunit protein bS18 (77 aa).

This sequence belongs to the bacterial ribosomal protein bS18 family. As to quaternary structure, part of the 30S ribosomal subunit. Forms a tight heterodimer with protein bS6.

In terms of biological role, binds as a heterodimer with protein bS6 to the central domain of the 16S rRNA, where it helps stabilize the platform of the 30S subunit. This chain is Small ribosomal subunit protein bS18, found in Bacillus cereus (strain ATCC 10987 / NRS 248).